Here is a 156-residue protein sequence, read N- to C-terminus: MQANKNQDELVKTFKAILKEERFGSQSEIVNALQSEGFNNINQSKVSRMLSKFGAVRTRNAKQEMVYCLPAELGVPTAGSPLKNLVLDVDHNQSMIVVRTSPGAAQLIARLLDSIGKPEGILGTIAGDDTIFICPSNIQEVDKTLETVKSLFNYAD.

This sequence belongs to the ArgR family.

It is found in the cytoplasm. Its pathway is amino-acid biosynthesis; L-arginine biosynthesis [regulation]. In terms of biological role, regulates arginine biosynthesis genes. The polypeptide is Arginine repressor (Shewanella loihica (strain ATCC BAA-1088 / PV-4)).